A 345-amino-acid polypeptide reads, in one-letter code: S-adenosylmethionine:tRNA ribosyltransferase-isomerase (345 aa).

It belongs to the QueA family. As to quaternary structure, monomer.

It localises to the cytoplasm. It carries out the reaction 7-aminomethyl-7-carbaguanosine(34) in tRNA + S-adenosyl-L-methionine = epoxyqueuosine(34) in tRNA + adenine + L-methionine + 2 H(+). It functions in the pathway tRNA modification; tRNA-queuosine biosynthesis. Functionally, transfers and isomerizes the ribose moiety from AdoMet to the 7-aminomethyl group of 7-deazaguanine (preQ1-tRNA) to give epoxyqueuosine (oQ-tRNA). The chain is S-adenosylmethionine:tRNA ribosyltransferase-isomerase from Alkalilimnicola ehrlichii (strain ATCC BAA-1101 / DSM 17681 / MLHE-1).